The sequence spans 1030 residues: Probable serine/threonine-protein kinase SIS8 (1030 aa).

2 stretches are compositionally biased toward polar residues: residues 44-58 (PNQSDEAEGSISTTK) and 399-419 (YSASPGDNDSIHVASSSNGIE). 4 disordered regions span residues 44–84 (PNQS…PEIK), 399–474 (YSAS…KAPF), 555–625 (TVES…ASST), and 689–736 (LGSN…SDCD). Composition is skewed to basic and acidic residues over residues 426 to 435 (TEFRTGEHRS), 458 to 471 (ISREDVKNQKKVEK), and 560 to 580 (NSTEAKKERGKDLETTQEGRH). Residues 613-625 (SQSDSSHSEASST) show a composition bias toward low complexity. The Protein kinase domain occupies 748-1003 (ITVGERIGLG…AEIMASLKRL (256 aa)). ATP-binding positions include 754-762 (IGLGSYGEV) and K775. Residue D871 is the Proton acceptor of the active site. Residues 1007–1023 (VTGSNIPRPVPSSSSLP) are compositionally biased toward polar residues. The tract at residues 1007-1030 (VTGSNIPRPVPSSSSLPTEHEQKD) is disordered.

Belongs to the protein kinase superfamily. Ser/Thr protein kinase family. As to quaternary structure, interacts with UGT72E1. In terms of tissue distribution, expressed roots, rosette and cauline leaves, and at lower levels in flowers and siliques.

The protein resides in the nucleus. It carries out the reaction L-seryl-[protein] + ATP = O-phospho-L-seryl-[protein] + ADP + H(+). The catalysed reaction is L-threonyl-[protein] + ATP = O-phospho-L-threonyl-[protein] + ADP + H(+). Functionally, acts as a negative regulator of salt tolerance. Mediates sugar response during early seedling development. This Arabidopsis thaliana (Mouse-ear cress) protein is Probable serine/threonine-protein kinase SIS8.